We begin with the raw amino-acid sequence, 199 residues long: GTP cyclohydrolase-2 (199 aa).

52-56 (RMHSE) is a GTP binding site. 3 residues coordinate Zn(2+): Cys57, Cys68, and Cys70. Residues Gln73, 94–96 (EGR), and Thr116 each bind GTP. Asp128 functions as the Proton acceptor in the catalytic mechanism. Arg130 serves as the catalytic Nucleophile. GTP is bound by residues Thr151 and Lys156.

Belongs to the GTP cyclohydrolase II family. The cofactor is Zn(2+).

The enzyme catalyses GTP + 4 H2O = 2,5-diamino-6-hydroxy-4-(5-phosphoribosylamino)-pyrimidine + formate + 2 phosphate + 3 H(+). The protein operates within cofactor biosynthesis; riboflavin biosynthesis; 5-amino-6-(D-ribitylamino)uracil from GTP: step 1/4. Its function is as follows. Catalyzes the conversion of GTP to 2,5-diamino-6-ribosylamino-4(3H)-pyrimidinone 5'-phosphate (DARP), formate and pyrophosphate. The polypeptide is GTP cyclohydrolase-2 (Aliivibrio salmonicida (strain LFI1238) (Vibrio salmonicida (strain LFI1238))).